Reading from the N-terminus, the 260-residue chain is 4-hydroxy-tetrahydrodipicolinate reductase (260 aa).

12–17 provides a ligand contact to NAD(+); the sequence is GFRGKM. K40 is a binding site for NADP(+). NAD(+) is bound by residues 92-94 and 118-121; these read GTT and APNF. H148 functions as the Proton donor/acceptor in the catalytic mechanism. Residue H149 coordinates (S)-2,3,4,5-tetrahydrodipicolinate. K152 (proton donor) is an active-site residue. 158–159 is a binding site for (S)-2,3,4,5-tetrahydrodipicolinate; sequence GT.

It belongs to the DapB family.

Its subcellular location is the cytoplasm. The enzyme catalyses (S)-2,3,4,5-tetrahydrodipicolinate + NAD(+) + H2O = (2S,4S)-4-hydroxy-2,3,4,5-tetrahydrodipicolinate + NADH + H(+). The catalysed reaction is (S)-2,3,4,5-tetrahydrodipicolinate + NADP(+) + H2O = (2S,4S)-4-hydroxy-2,3,4,5-tetrahydrodipicolinate + NADPH + H(+). The protein operates within amino-acid biosynthesis; L-lysine biosynthesis via DAP pathway; (S)-tetrahydrodipicolinate from L-aspartate: step 4/4. Its function is as follows. Catalyzes the conversion of 4-hydroxy-tetrahydrodipicolinate (HTPA) to tetrahydrodipicolinate. This chain is 4-hydroxy-tetrahydrodipicolinate reductase, found in Lactococcus lactis subsp. lactis (strain IL1403) (Streptococcus lactis).